We begin with the raw amino-acid sequence, 572 residues long: E3 SUMO-protein ligase PIAS2 (572 aa).

The region spanning 11-45 (VSSFRVSELQVLLGFAGRNKSGRKHDLLMRALHLL) is the SAP domain. An LXXLL motif motif is present at residues 19–23 (LQVLL). Glycyl lysine isopeptide (Lys-Gly) (interchain with G-Cter in SUMO2) cross-links involve residues lysine 46 and lysine 249. The region spanning 134 to 299 (QPSPPIPPVH…SMSVYLVRQL (166 aa)) is the PINIT domain. Residues 331-412 (PDSEIATTSL…FMEILNDCSD (82 aa)) form an SP-RING-type zinc finger. Zn(2+) contacts are provided by cysteine 362, histidine 364, cysteine 385, and cysteine 388. Residues lysine 430, lysine 435, lysine 443, and lysine 452 each participate in a glycyl lysine isopeptide (Lys-Gly) (interchain with G-Cter in SUMO2) cross-link. An SUMO1-binding region spans residues 467–473 (IDVIDLT). Serine 476, serine 477, and serine 478 each carry phosphoserine. A Nuclear localization signal motif is present at residues 484–492 (PPAKRKCIF). Residue lysine 489 forms a Glycyl lysine isopeptide (Lys-Gly) (interchain with G-Cter in SUMO2) linkage. Serine 499 is subject to Phosphoserine. Lysine 502 participates in a covalent cross-link: Glycyl lysine isopeptide (Lys-Gly) (interchain with G-Cter in SUMO2). Positions 523-572 (AAIPPSLTDYSVPFHHTPVSSMSSDLPGEQRRNDINNEVQLGTSSDTVQQ) are disordered. The segment covering 558-572 (NNEVQLGTSSDTVQQ) has biased composition (polar residues).

It belongs to the PIAS family. As to quaternary structure, binds SUMO1 and UBE2I. Interacts with AXIN1, JUN, MDM2, PARK7, TP53 and TP73 isoform alpha, but not TP73 isoform beta. Interacts with STAT4 following IL12 and IFN-alpha stimulation of T-cells. Interacts also with GTF2I, GTF2IRD1, IKFZ1, DAB2 and MSX2, as well as with several steroid receptors, including ESR1, ESR2, NR3C1, PGR, AR, and with NCOA2. Sumoylation of a target protein seems to enhance the interaction. Binds to sumoylated ELK1. Binds DNA, such as CDKN1A promoter, in a sequence-specific manner. Interacts with PLAG1. Interacts with KLF8; the interaction results in SUMO ligation and repression of KLF8 transcriptional activity and of its cell cycle progression into G(1) phase. Interacts with IFIH1/MDA5. Interacts with PML. Interacts with PRDM1. Post-translationally, sumoylated. As to expression, mainly expressed in testis.

Its subcellular location is the nucleus speckle. It localises to the nucleus. It is found in the PML body. Its pathway is protein modification; protein sumoylation. In terms of biological role, functions as an E3-type small ubiquitin-like modifier (SUMO) ligase, stabilizing the interaction between UBE2I and the substrate, and as a SUMO-tethering factor. Plays a crucial role as a transcriptional coregulation in various cellular pathways, including the STAT pathway, the p53 pathway and the steroid hormone signaling pathway. The effects of this transcriptional coregulation, transactivation or silencing may vary depending upon the biological context and PIAS2 isoform studied. However, it seems to be mostly involved in gene silencing. Binds to sumoylated ELK1 and enhances its transcriptional activity by preventing recruitment of HDAC2 by ELK1, thus reversing SUMO-mediated repression of ELK1 transactivation activity. Sumoylates PML at'Lys-65' and 'Lys-160'. The polypeptide is E3 SUMO-protein ligase PIAS2 (Pias2) (Rattus norvegicus (Rat)).